Consider the following 585-residue polypeptide: Arginine--tRNA ligase (585 aa).

Residues 131 to 141 (ANPTGPMHVGH) carry the 'HIGH' region motif.

It belongs to the class-I aminoacyl-tRNA synthetase family. As to quaternary structure, monomer.

It localises to the cytoplasm. It carries out the reaction tRNA(Arg) + L-arginine + ATP = L-arginyl-tRNA(Arg) + AMP + diphosphate. This chain is Arginine--tRNA ligase, found in Brucella ovis (strain ATCC 25840 / 63/290 / NCTC 10512).